The sequence spans 549 residues: Thermosome subunit (549 aa).

Residues 528–538 are compositionally biased toward basic and acidic residues; the sequence is EKEKEGEKGGG. The segment at 528–549 is disordered; sequence EKEKEGEKGGGSEEFSGSSDLD. Residues 540–549 show a composition bias toward low complexity; it reads EEFSGSSDLD.

It belongs to the TCP-1 chaperonin family. As to quaternary structure, forms an oligomeric complex of eight-membered rings.

In terms of biological role, molecular chaperone; binds unfolded polypeptides in vitro, and has a weak ATPase activity. The polypeptide is Thermosome subunit (ths) (Pyrococcus horikoshii (strain ATCC 700860 / DSM 12428 / JCM 9974 / NBRC 100139 / OT-3)).